A 590-amino-acid polypeptide reads, in one-letter code: UvrABC system protein C (590 aa).

A GIY-YIG domain is found at 14 to 91 (DQPGCYLMKD…IKKYDPKYNV (78 aa)). The region spanning 196–231 (NEVKKELEAKMLEASENLQFERAKEFRDQIAHIEST) is the UVR domain.

Belongs to the UvrC family. As to quaternary structure, interacts with UvrB in an incision complex.

It is found in the cytoplasm. In terms of biological role, the UvrABC repair system catalyzes the recognition and processing of DNA lesions. UvrC both incises the 5' and 3' sides of the lesion. The N-terminal half is responsible for the 3' incision and the C-terminal half is responsible for the 5' incision. This Bacillus licheniformis (strain ATCC 14580 / DSM 13 / JCM 2505 / CCUG 7422 / NBRC 12200 / NCIMB 9375 / NCTC 10341 / NRRL NRS-1264 / Gibson 46) protein is UvrABC system protein C.